Reading from the N-terminus, the 322-residue chain is Picrinine-N-methytransferase (322 aa).

The tract at residues 103–112 (MLDVGCGLGG) is SAM motif I. The SAM motif II stretch occupies residues 166–174 (GTFDLVFTI). The segment at 193 to 202 (VAAPGAPVVI) is SAM motif III.

The protein belongs to the class I-like SAM-binding methyltransferase superfamily. gTMT family. As to quaternary structure, homodimer. In terms of tissue distribution, accumulates in tissues actively synthesizing monoterpenoid indole alkaloids (MIAs) (at protein level). Mainly expressed in young leaves, but barely in roots and stems.

The protein resides in the cytoplasm. Its subcellular location is the cytosol. It catalyses the reaction picrinine + S-adenosyl-L-methionine = ervincine + S-adenosyl-L-homocysteine + H(+). It participates in alkaloid biosynthesis; vindoline biosynthesis. Its function is as follows. S-adenosyl-L-methionine-dependent N-methyltransferase involved in the biosynthesis of biologically active monoterpenoid indole alkaloids (MIAs) natural products including vindoline. Catalyzes the conversion of picrinine to N-methylpicrinine (ervincine). Also accepts, with low efficiency, 21-hydroxycyclolochnericine and norajmaline as substrates. This is Picrinine-N-methytransferase from Vinca minor (Common periwinkle).